The chain runs to 365 residues: UBX domain-containing protein 2B (365 aa).

Positions 1–97 (MADGGASPAQ…MSDDKENQRF (97 aa)) are disordered. Basic and acidic residues-rich tracts occupy residues 50 to 63 (DEAKRQSLRSDKPT) and 73 to 95 (LKIDSFRSLRKPERSMSDDKENQ). In terms of domain architecture, SEP spans 175–240 (DVQILLKLWR…MEDHQEQEYV (66 aa)). Residues 286–363 (DSVPATKIQI…DILNTVILQQ (78 aa)) enclose the UBX domain.

Belongs to the NSFL1C family.

The protein localises to the nucleus. The protein resides in the cytoplasm. It is found in the cytosol. It localises to the endoplasmic reticulum. Its subcellular location is the golgi apparatus. The protein localises to the cytoskeleton. The protein resides in the microtubule organizing center. It is found in the centrosome. Adapter protein required for Golgi and endoplasmic reticulum biogenesis. Involved in Golgi and endoplasmic reticulum maintenance during interphase and in their reassembly at the end of mitosis. Regulates the centrosomal levels of kinase AURKA/Aurora A during mitotic progression by promoting AURKA removal from centrosomes in prophase. Also, regulates spindle orientation during mitosis. This Gallus gallus (Chicken) protein is UBX domain-containing protein 2B (UBXN2B).